Reading from the N-terminus, the 411-residue chain is Exodeoxyribonuclease 7 large subunit (411 aa).

Belongs to the XseA family. As to quaternary structure, heterooligomer composed of large and small subunits.

It is found in the cytoplasm. The catalysed reaction is Exonucleolytic cleavage in either 5'- to 3'- or 3'- to 5'-direction to yield nucleoside 5'-phosphates.. Functionally, bidirectionally degrades single-stranded DNA into large acid-insoluble oligonucleotides, which are then degraded further into small acid-soluble oligonucleotides. The sequence is that of Exodeoxyribonuclease 7 large subunit from Mycobacterium sp. (strain JLS).